The chain runs to 524 residues: Serine/threonine-protein phosphatase 2A 56 kDa regulatory subunit gamma isoform (524 aa).

Position 1 is an N-acetylmethionine (methionine 1). The tract at residues 476–508 is disordered; that stretch reads SDEARQAQKELKKDRPLVRRKSELPQDPHTEKA.

Belongs to the phosphatase 2A regulatory subunit B56 family. As to quaternary structure, PP2A consists of a common heterodimeric core enzyme, composed of PPP2CA a 36 kDa catalytic subunit (subunit C) and PPP2R1A a 65 kDa constant regulatory subunit (PR65 or subunit A), that associates with a variety of regulatory subunits. Proteins that associate with the core dimer include three families of regulatory subunits B (the R2/B/PR55/B55, R3/B''/PR72/PR130/PR59 and R5/B'/B56 families), the 48 kDa variable regulatory subunit, viral proteins, and cell signaling molecules. Interacts with SGO1. Interacts with SGO1; the interaction is direct. May interact with TP53. Interacts with IER3 and/or ERK kinases; regulates ERK dephosphorylation. Interacts with CIP2A; this interaction stabilizes CIP2A. In terms of tissue distribution, highest levels in heart, liver and brain. Lower levels in skeletal muscle, spleen, kidney and lung. Isoform 4 is testis-specific.

The protein resides in the nucleus. It is found in the chromosome. It localises to the centromere. Its function is as follows. The B regulatory subunit might modulate substrate selectivity and catalytic activity, and might also direct the localization of the catalytic enzyme to a particular subcellular compartment. The PP2A-PPP2R5C holoenzyme may activate TP53 and play a role in DNA damage-induced inhibition of cell proliferation. PP2A-PPP2R5C may also regulate the ERK signaling pathway through ERK dephosphorylation. The chain is Serine/threonine-protein phosphatase 2A 56 kDa regulatory subunit gamma isoform (Ppp2r5c) from Mus musculus (Mouse).